Consider the following 185-residue polypeptide: Elongation factor P (185 aa).

Belongs to the elongation factor P family.

The protein localises to the cytoplasm. It participates in protein biosynthesis; polypeptide chain elongation. Functionally, involved in peptide bond synthesis. Stimulates efficient translation and peptide-bond synthesis on native or reconstituted 70S ribosomes in vitro. Probably functions indirectly by altering the affinity of the ribosome for aminoacyl-tRNA, thus increasing their reactivity as acceptors for peptidyl transferase. This Herpetosiphon aurantiacus (strain ATCC 23779 / DSM 785 / 114-95) protein is Elongation factor P.